The chain runs to 557 residues: Potassium-transporting ATPase potassium-binding subunit (557 aa).

Helical transmembrane passes span 5–25 (GFLL…PLGS), 63–83 (LCAI…MLLG), 132–152 (GLTV…FALI), 170–190 (LLRI…LFFI), 253–273 (FVQM…FGEV), 283–303 (LLWA…WAEV), 329–349 (VLVS…AVIA), 356–376 (ALGG…FGGV), 379–399 (GLYG…LMIG), 416–436 (LTAL…ALAM), 484–504 (LLAF…MAIA), and 526–546 (LFVG…FIPA).

Belongs to the KdpA family. In terms of assembly, the system is composed of three essential subunits: KdpA, KdpB and KdpC.

The protein resides in the cell inner membrane. Functionally, part of the high-affinity ATP-driven potassium transport (or Kdp) system, which catalyzes the hydrolysis of ATP coupled with the electrogenic transport of potassium into the cytoplasm. This subunit binds the periplasmic potassium ions and delivers the ions to the membrane domain of KdpB through an intramembrane tunnel. The chain is Potassium-transporting ATPase potassium-binding subunit from Escherichia coli O139:H28 (strain E24377A / ETEC).